The chain runs to 225 residues: Phosphoserine phosphatase (225 aa).

Position 1 is an N-acetylmethionine (methionine 1). Aspartate 20 serves as the catalytic Nucleophile. Aspartate 20 and aspartate 22 together coordinate Mg(2+). Position 20–22 (20–22 (DVD)) interacts with L-serine. Residue aspartate 22 is the Proton donor of the active site. Methionine 52 provides a ligand contact to O-phospho-L-serine. Residue glycine 53 participates in phosphate binding. L-serine contacts are provided by residues 109 to 111 (SGG) and lysine 158. Residues 109–111 (SGG) and lysine 158 each bind O-phospho-L-serine. Mg(2+) is bound at residue aspartate 179. Residue threonine 182 coordinates O-phospho-L-serine. Threonine 182 contributes to the phosphate binding site.

Belongs to the HAD-like hydrolase superfamily. SerB family. In terms of assembly, homodimer. Mg(2+) serves as cofactor.

It localises to the cytoplasm. The protein resides in the cytosol. It carries out the reaction O-phospho-L-serine + H2O = L-serine + phosphate. The catalysed reaction is O-phospho-D-serine + H2O = D-serine + phosphate. Its pathway is amino-acid biosynthesis; L-serine biosynthesis; L-serine from 3-phospho-D-glycerate: step 3/3. Its activity is regulated as follows. Inhibited by calcium ions. Its function is as follows. Catalyzes the last irreversible step in the biosynthesis of L-serine from carbohydrates, the dephosphorylation of O-phospho-L-serine to L-serine. L-serine can then be used in protein synthesis, to produce other amino acids, in nucleotide metabolism or in glutathione synthesis, or can be racemized to D-serine, a neuromodulator. May also act on O-phospho-D-serine. The chain is Phosphoserine phosphatase from Homo sapiens (Human).